A 400-amino-acid chain; its full sequence is PHD finger protein 24 (400 aa).

Glycine 2 carries the N-myristoyl glycine lipid modification. A compositionally biased stretch (basic and acidic residues) spans 28 to 38; the sequence is LRDRPSIRRTG. The tract at residues 28–99 is disordered; sequence LRDRPSIRRT…PEEFDRTSRF (72 aa). Arginine 36 bears the Omega-N-methylarginine mark. Serine 43 is subject to Phosphoserine. The residue at position 47 (threonine 47) is a Phosphothreonine. Residue serine 51 is modified to Phosphoserine. Positions 78–97 are enriched in basic and acidic residues; the sequence is AWERLRDGRGVEPEEFDRTS. The segment at 129–190 adopts a PHD-type zinc-finger fold; sequence NDEMCDVCEV…TGWSCHYCDN (62 aa).

The chain is PHD finger protein 24 from Homo sapiens (Human).